Consider the following 232-residue polypeptide: Ribonuclease 3 (232 aa).

The RNase III domain maps to 10-135 (ALKIYEATGY…LIGAMYMDGG (126 aa)). Glutamate 48 provides a ligand contact to Mg(2+). Residue aspartate 52 is part of the active site. Asparagine 121 and glutamate 124 together coordinate Mg(2+). Glutamate 124 is an active-site residue. The region spanning 161–230 (DPKTALQEWV…AKLMLKKITE (70 aa)) is the DRBM domain.

It belongs to the ribonuclease III family. As to quaternary structure, homodimer. Requires Mg(2+) as cofactor.

The protein resides in the cytoplasm. It carries out the reaction Endonucleolytic cleavage to 5'-phosphomonoester.. Digests double-stranded RNA. Involved in the processing of primary rRNA transcript to yield the immediate precursors to the large and small rRNAs (23S and 16S). Processes some mRNAs, and tRNAs when they are encoded in the rRNA operon. Processes pre-crRNA and tracrRNA of type II CRISPR loci if present in the organism. The sequence is that of Ribonuclease 3 from Anaplasma marginale (strain St. Maries).